The following is a 353-amino-acid chain: Putative transcription factor MTF1 (353 aa).

Composition is skewed to polar residues over residues 11 to 26 and 36 to 58; these read VTRS…TSPA and EPSN…QQGN. 2 disordered regions span residues 11-96 and 129-174; these read VTRS…ALPC and FTTT…TTNP. 2 stretches are compositionally biased toward low complexity: residues 59 to 95 and 133 to 145; these read TEAS…PALP and NSSP…SPSS. A compositionally biased stretch (basic residues) spans 148–164; that stretch reads SHTRKNSKYTVRHHRTR. Polar residues predominate over residues 165–174; the sequence is QSSFNGTTNP.

Its subcellular location is the nucleus. In terms of biological role, may be involved in transcriptional activation. The protein is Putative transcription factor MTF1 (MTF1) of Mucor circinelloides f. lusitanicus (Mucor racemosus var. lusitanicus).